Consider the following 218-residue polypeptide: Phosphoribosylformylglycinamidine synthase subunit PurQ (218 aa).

Residues 2-218 enclose the Glutamine amidotransferase type-1 domain; it reads SIAVLRFPGT…GARMLRGLAC (217 aa). C86 serves as the catalytic Nucleophile. Active-site residues include H195 and E197.

In terms of assembly, part of the FGAM synthase complex composed of 1 PurL, 1 PurQ and 2 PurS subunits.

It is found in the cytoplasm. The catalysed reaction is N(2)-formyl-N(1)-(5-phospho-beta-D-ribosyl)glycinamide + L-glutamine + ATP + H2O = 2-formamido-N(1)-(5-O-phospho-beta-D-ribosyl)acetamidine + L-glutamate + ADP + phosphate + H(+). It carries out the reaction L-glutamine + H2O = L-glutamate + NH4(+). It participates in purine metabolism; IMP biosynthesis via de novo pathway; 5-amino-1-(5-phospho-D-ribosyl)imidazole from N(2)-formyl-N(1)-(5-phospho-D-ribosyl)glycinamide: step 1/2. Its function is as follows. Part of the phosphoribosylformylglycinamidine synthase complex involved in the purines biosynthetic pathway. Catalyzes the ATP-dependent conversion of formylglycinamide ribonucleotide (FGAR) and glutamine to yield formylglycinamidine ribonucleotide (FGAM) and glutamate. The FGAM synthase complex is composed of three subunits. PurQ produces an ammonia molecule by converting glutamine to glutamate. PurL transfers the ammonia molecule to FGAR to form FGAM in an ATP-dependent manner. PurS interacts with PurQ and PurL and is thought to assist in the transfer of the ammonia molecule from PurQ to PurL. The protein is Phosphoribosylformylglycinamidine synthase subunit PurQ of Wolinella succinogenes (strain ATCC 29543 / DSM 1740 / CCUG 13145 / JCM 31913 / LMG 7466 / NCTC 11488 / FDC 602W) (Vibrio succinogenes).